The chain runs to 4749 residues: E3 ubiquitin-protein ligase MYCBP2 (4749 aa).

3 disordered regions span residues 87–127, 170–192, and 609–628; these read DRDQ…RSKS, AASK…SREP, and ASKG…KPYK. A compositionally biased stretch (basic residues) spans 100–124; sequence SRNKKILNKKKLKRKQKSKSKVKTR. A phosphoserine mark is found at Ser127, Ser178, Ser181, and Ser183. RCC1 repeat units follow at residues 600-655, 699-755, 907-957, 958-1009, and 1011-1066; these read DGSV…VISK, NGEV…MMCP, KRDK…VLME, NGDV…LLMD, and QVFT…LRID. Basic residues predominate over residues 899 to 910; sequence SHPAQLKHKRDK. The segment at 899 to 928 is disordered; sequence SHPAQLKHKRDKHKDGSGDRGEKDASKITT. Positions 911–924 are enriched in basic and acidic residues; that stretch reads HKDGSGDRGEKDAS. Residues 1235–1386 are PHR domain 1; that stretch reads NRFESHGGGW…GQIPQLLYRL (152 aa). Ser1621 bears the Phosphoserine mark. A PHR domain 2 region spans residues 1723–1881; that stretch reads NRFTKTSQGR…GQIPQILYYR (159 aa). A disulfide bridge links Cys1745 with Cys1860. Residues 2018-2544 are RAE1 binding; that stretch reads AVIESEHPYK…FNQHLGKSLL (527 aa). 2 disordered regions span residues 2313 to 2336 and 2780 to 3084; these read KKTS…SAAA and QQRQ…KGDG. One copy of the Filamin repeat lies at 2331–2438; it reads SPSAAASSAD…IDAGLEVKVK (108 aa). Positions 2780–2803 are enriched in polar residues; the sequence is QQRQLQSDRGTISTSSRPVSTSGK. Over residues 2814–2832 the composition is skewed to basic and acidic residues; the sequence is VKPDGHVSRTPADQKKPRG. A Phosphoserine modification is found at Ser2841. A compositionally biased stretch (basic and acidic residues) spans 2847 to 2857; sequence DAAKLRSDSHS. The segment covering 2858-2879 has biased composition (polar residues); the sequence is RSLSPNHNTLQTLKSDGRTSSG. Residues Ser2859 and Ser2861 each carry the phosphoserine modification. Low complexity-rich tracts occupy residues 2884-2894 and 2904-2917; these read SPGPGSRSSSP and SSPS…SSSP. Phosphoserine occurs at positions 2905 and 2911. Residues 2918–2929 show a composition bias toward polar residues; it reads QDKNLPQKSTAP. The span at 2932–2943 shows a compositional bias: basic and acidic residues; that stretch reads TKLDPPRERSKS. 3 positions are modified to phosphoserine: Ser2941, Ser2943, and Ser2992. Residues 3008-3021 show a composition bias toward polar residues; that stretch reads CTSSTLKTNGVTDS. 2 stretches are compositionally biased toward basic and acidic residues: residues 3027–3037 and 3047–3056; these read GDLKSVDEGSN and PLKDEQEMRA. Ser3057 carries the phosphoserine modification. Residues 3060 to 3073 show a composition bias toward basic residues; that stretch reads ISRKCANRHTRPKK. Ser3162, Ser3550, and Ser3577 each carry phosphoserine. Residues 3677 to 3700 form a disordered region; sequence VEAEEDEDEDNKSNKENAEQEKDT. Residues 3687–3700 are compositionally biased toward basic and acidic residues; the sequence is NKSNKENAEQEKDT. Residues 3789-3967 enclose the DOC domain; that stretch reads FSISVQSGFE…SVAQQRSCEA (179 aa). The interval 3986 to 4007 is disordered; that stretch reads SGDAEPTPEQEEKALLSSPEGE. The residue at position 3992 (Thr3992) is a Phosphothreonine. Residues Ser4002 and Ser4003 each carry the phosphoserine modification. 10 residues coordinate Zn(2+): Cys4499, Cys4502, Cys4517, His4519, His4522, Cys4525, Cys4546, Cys4549, Cys4615, and Cys4618. The RING-type; atypical zinc finger occupies 4499–4550; that stretch reads CMICFTEALSAAPAIQLDCSHVFHLQCCRRVLENRWLGPRITFGFISCPICK. The tandem cysteine domain stretch occupies residues 4610–4747; the sequence is YAYYVCYKCR…LGCGVCRNAH (138 aa). The active site involves Cys4629. Cys4646, Cys4649, Cys4658, His4661, Cys4670, Cys4673, and Cys4674 together coordinate Zn(2+). Cys4681 is an active-site residue. The Zn(2+) site is built by Cys4688, Cys4691, Cys4709, Cys4723, His4729, Cys4740, and Cys4743.

The protein belongs to the RING-Cys relay (RCR) family. In terms of assembly, interacts with MYC. Interacts with TSC2 (tuberin) when TSC2 is in complex with TSC1 (hamartin). Interacts with FBXO45. Interacts with RAE1. Interacts with CPNE1 (via VWFA domain) and CPNE4 (via VWFA domain). Interacts with (sumoylated) RANGAP1; interaction with sumoylated RANGAP1 inhibits E3 ubiquitin-protein ligase activity and promotes MYCBP2 translocation to the nucleus. Interacts with RAN. Interacts with ATP13A2; the interaction inhibits the ubiquitination of TSC2 by MYCBP2. Interacts with USP11. Post-translationally, autoubiquitinated. As to expression, expression is mostly restricted to the nervous system, including expression in motor and sensory axons. During postnatal development, expression is particularly strong in the cerebellum, hippocampus and retina. Lower levels of expression are observed throughout the cerebral cortex.

It localises to the nucleus. The protein localises to the cell projection. Its subcellular location is the axon. The protein resides in the cytoplasm. It is found in the cytoskeleton. The catalysed reaction is [E2 ubiquitin-conjugating enzyme]-S-ubiquitinyl-L-cysteine + [acceptor protein]-L-threonine = [E2 ubiquitin-conjugating enzyme]-L-cysteine + [acceptor protein]-3-O-ubiquitinyl-L-threonine.. It functions in the pathway protein modification; protein ubiquitination. Its function is as follows. Atypical E3 ubiquitin-protein ligase which specifically mediates ubiquitination of threonine and serine residues on target proteins, instead of ubiquitinating lysine residues. Shows esterification activity towards both threonine and serine, with a preference for threonine, and acts via two essential catalytic cysteine residues that relay ubiquitin to its substrate via thioester intermediates. Interacts with the E2 enzymes UBE2D1, UBE2D3, UBE2E1 and UBE2L3. Plays a key role in neural development, probably by mediating ubiquitination of threonine residues on target proteins. Involved in different processes such as regulation of neurite outgrowth, synaptic growth, synaptogenesis and axon degeneration. Required for the formation of major central nervous system axon tracts. Required for proper axon growth by regulating axon navigation and axon branching: acts by regulating the subcellular location and stability of MAP3K12/DLK. Required for proper localization of retinogeniculate projections but not for eye-specific segregation. Regulates axon guidance in the olfactory system. Involved in Wallerian axon degeneration, an evolutionarily conserved process that drives the loss of damaged axons: acts by promoting destabilization of NMNAT2, probably via ubiquitination of NMNAT2. Catalyzes ubiquitination of threonine and/or serine residues on NMNAT2, consequences of threonine and/or serine ubiquitination are however unknown. Regulates the internalization of TRPV1 in peripheral sensory neurons. May mediate ubiquitination and subsequent proteasomal degradation of TSC2/tuberin. Independently of the E3 ubiquitin-protein ligase activity, also acts as a guanosine exchange factor (GEF) for RAN in neurons of dorsal root ganglia. May function as a facilitator or regulator of transcriptional activation by MYC. Acts in concert with HUWE1 to regulate the circadian clock gene expression by promoting the lithium-induced ubiquination and degradation of NR1D1. The protein is E3 ubiquitin-protein ligase MYCBP2 of Mus musculus (Mouse).